A 213-amino-acid chain; its full sequence is G2/mitotic-specific cyclin-1 (213 aa).

The disordered stretch occupies residues 1–23; the sequence is MKFSEEKNVSNNPTNFEGGLDSR.

It belongs to the cyclin family. Cyclin AB subfamily. Interacts with the CDC2 protein kinase to form a serine/threonine kinase holoenzyme complex also known as maturation promoting factor (MPF). The cyclin subunit imparts substrate specificity to the complex. Only expressed in organs with dividing cells.

Its function is as follows. Essential for the control of the cell cycle at the G2/M (mitosis) transition. This is G2/mitotic-specific cyclin-1 from Medicago sativa (Alfalfa).